The chain runs to 1172 residues: Thrombospondin-2 (1172 aa).

An N-terminal signal peptide occupies residues 1–18 (MVWRLVLLALWVWPSTQA). The region spanning 19–215 (GHQDKDTTFD…LQNVHLVFEN (197 aa)) is the Laminin G-like domain. A heparin-binding region spans residues 19-232 (GHQDKDTTFD…KKGCQQGQGA (214 aa)). N-linked (GlcNAc...) asparagine glycans are attached at residues N151, N316, and N330. The 58-residue stretch at 318–375 (SACWQDGRFFAENETWVVDSCTTCTCKKFKTICHQITCPPATCASPSFVEGECCPSCL) folds into the VWFC domain. 3 consecutive TSP type-1 domains span residues 381–431 (EEGW…SKCD), 437–492 (DGGW…APCP), and 494–549 (DGRW…RSCP). 27 disulfide bridges follow: C393/C425, C397/C430, C408/C415, C449/C486, C453/C491, C464/C476, C506/C543, C510/C548, C521/C533, C553/C564, C558/C574, C577/C588, C594/C610, C601/C619, C622/C646, C652/C665, C659/C678, C680/C691, C707/C715, C720/C740, C756/C776, C779/C799, C815/C835, C838/C858, C876/C896, C912/C932, and C948/C1169. An N-linked (GlcNAc...) asparagine glycan is attached at N457. One can recognise an EGF-like 1 domain in the interval 549-589 (PVDGCLSNPCFPGAQCSSFPDGSWSCGSCPVGFLGNGTHCE). N584 carries an N-linked (GlcNAc...) asparagine glycan. An EGF-like 2 domain is found at 648–692 (PENPCKDKTHNCHKHAECIYLGHFSDPMYKCECQTGYAGDGLICG). 8 TSP type-3 repeats span residues 693-728 (EDSD…NSGQ), 729-764 (EDFD…NPRQ), 765-787 (ADYD…NPAQ), 788-823 (IDTD…NTDQ), 824-846 (RDTD…NPDQ), 847-884 (TDVD…NANQ), 885-920 (ADHD…NPDQ), and 921-956 (EDLD…AISE). N710 carries an N-linked (GlcNAc...) asparagine glycan. A disordered region spans residues 843 to 931 (NPDQTDVDND…DLDGDGRGDI (89 aa)). Acidic residues predominate over residues 847 to 866 (TDVDNDLVGDQCDNNEDIDD). The segment covering 870–884 (QNNQDNCPYISNANQ) has biased composition (polar residues). Positions 896-905 (CDPDDDNDGV) are enriched in acidic residues. Positions 928–930 (RGD) match the Cell attachment site motif. In terms of domain architecture, TSP C-terminal spans 960 to 1172 (RNFQMVPLDP…SDLKYECRDI (213 aa)). An N-linked (GlcNAc...) asparagine glycan is attached at N1069.

The protein belongs to the thrombospondin family. As to quaternary structure, homotrimer; disulfide-linked. Interacts (via the TSP type I repeats) with CD36; the interaction conveys an antiangiogenic effect. Interacts (via the TSP type I repeats) with HRG; the interaction blocks the antiangiogenic effect of THBS2 with CD36. Can bind to fibrinogen, fibronectin, laminin and type V collagen. In terms of tissue distribution, high expression in invertebral disk tissue.

Functionally, adhesive glycoprotein that mediates cell-to-cell and cell-to-matrix interactions. Ligand for CD36 mediating antiangiogenic properties. The polypeptide is Thrombospondin-2 (THBS2) (Homo sapiens (Human)).